Consider the following 111-residue polypeptide: Resistin-like gamma (111 aa).

Residues 1–23 form the signal peptide; the sequence is MKTAICSLLICIFLLQLMVPVNT. Cystine bridges form between cysteine 55/cysteine 108, cysteine 67/cysteine 107, cysteine 76/cysteine 93, cysteine 78/cysteine 95, and cysteine 82/cysteine 97.

It belongs to the resistin/FIZZ family. Homodimer. Heterodimer with RETNLB. Highly expressed in bone marrow, spleen and white blood cells. Also detected at low levels in thymus, lung, trachea, white adipose tissue, nasal respiratory epithelium, colon, small intestine, kidney, liver, and heart.

It localises to the secreted. In terms of biological role, probable hormone. Promotes chemotaxis in myeloid cells. The sequence is that of Resistin-like gamma from Rattus norvegicus (Rat).